A 540-amino-acid chain; its full sequence is Cytochrome P450 monooxygenase ORF5 (540 aa).

The chain crosses the membrane as a helical span at residues 48–68 (YHALGTAIALFACACAYALVA). N-linked (GlcNAc...) asparagine glycosylation is found at Asn-376 and Asn-460. Cys-483 provides a ligand contact to heme.

The protein belongs to the cytochrome P450 family. Heme serves as cofactor.

Its subcellular location is the membrane. The protein operates within sesquiterpene biosynthesis. Its function is as follows. Cytochrome P450 monooxygenase; part of the gene cluster that mediates the biosynthesis of PR-toxin, a bicyclic sesquiterpene belonging to the eremophilane class and acting as a mycotoxin. The first step of the pathway is catalyzed by the aristolochene synthase which performs the cyclization of trans,trans-farnesyl diphosphate (FPP) to the bicyclic sesquiterpene aristolochene. Following the formation of aristolochene, the non-oxygenated aristolochene is converted to the trioxygenated intermediate eremofortin B, via 7-epi-neopetasone. This conversion appears to involve three enzymes, a hydroxysterol oxidase-like enzyme, the quinone-oxidase prx3 that forms the quinone-type-structure in the bicyclic nucleus of aristolochene with the C8-oxo group and the C-3 hydroxyl group, and the P450 monooxygenase ORF6 that introduces the epoxide at the double bond between carbons 1 and 2. No monoxy or dioxy-intermediates have been reported to be released to the broth, so these three early oxidative reactions may be coupled together. Eremofortin B is further oxidized by another P450 monooxygenase, that introduces a second epoxide between carbons 7 and 11 prior to acetylation to eremofortin A by the acetyltransferase ORF8. The second epoxidation may be performed by a second P450 monooxygenase. After the acetylation step, eremofortin A is converted to eremofortin C and then to PR-toxin. First the conversion of eremofortin A to eremofortin C proceeds by oxidation of the side chain of the molecule at C-12 and is catalyzed by the short-chain oxidoreductase prx1. The cytochrome P450 monooxygenase ORF6 is probably also involved in this step. The primary alcohol formed at C-12 is finally oxidized by the short-chain alcohol dehydrogenase prx4 that forms PR-toxin. This chain is Cytochrome P450 monooxygenase ORF5, found in Penicillium roqueforti (strain FM164).